Here is a 2094-residue protein sequence, read N- to C-terminus: Nuclear mitotic apparatus protein 1 (2094 aa).

A head (Globular) region spans residues 1 to 210 (MTLHATRAAT…SPMGDILQTP (210 aa)). Serine 160 carries the phosphoserine modification. Threonine 161 bears the Phosphothreonine mark. Phosphoserine is present on residues serine 167 and serine 201. Threonine 209 bears the Phosphothreonine mark. The stretch at 211 to 1681 (QFQMRRLKKQ…ADQQLRDLGK (1471 aa)) forms a coiled coil. Serine 269 carries the phosphoserine modification. Position 377 is an N6-acetyllysine (lysine 377). Phosphoserine is present on residues serine 386 and serine 398. Residue lysine 443 is modified to N6-acetyllysine. 2 disordered regions span residues 617 to 636 (QLQA…TQAQ) and 723 to 759 (LKEQ…AGRK). The segment covering 627–636 (NAQTSVTQAQ) has biased composition (polar residues). N6-acetyllysine is present on lysine 878. 3 disordered regions span residues 921-1000 (SLEL…TQER), 1081-1143 (LVKK…EGLT), and 1173-1223 (ELGH…SSLI). Residues 935–951 (ASDQLGEQQGRPFSSTH) show a composition bias toward polar residues. 2 stretches are compositionally biased toward basic and acidic residues: residues 956-972 (AMER…ERLR) and 983-998 (QEER…RLTQ). Position 1183 is a phosphoserine (serine 1183). The span at 1194 to 1206 (KAQDHSKAEEEWK) shows a compositional bias: basic and acidic residues. Serine 1221 carries the phosphoserine modification. An N6-acetyllysine modification is found at lysine 1507. Phosphoserine is present on serine 1583. Lysine 1681 participates in a covalent cross-link: Glycyl lysine isopeptide (Lys-Gly) (interchain with G-Cter in SUMO2). Positions 1681 to 1858 (KFQVATDALK…NSALLSLPGY (178 aa)) are membrane-binding domain 1. Residues 1682–2094 (FQVATDALKS…TPRAKGKVKH (413 aa)) are tail (Globular). Phosphoserine occurs at positions 1703, 1706, and 1710. Residues 1718-1743 (SVASKLPRTQPDGTSVPGEPASPISQ) form a disordered region. A Tankyrase-binding domain motif is present at residues 1724–1730 (PRTQPDG). Residues serine 1739 and serine 1742 each carry the phosphoserine modification. Lysine 1748 participates in a covalent cross-link: Glycyl lysine isopeptide (Lys-Gly) (interchain with G-Cter in SUMO1); alternate. A Glycyl lysine isopeptide (Lys-Gly) (interchain with G-Cter in SUMO2); alternate cross-link involves residue lysine 1748. The residue at position 1751 (serine 1751) is a Phosphoserine. Phosphoserine; by PLK1 is present on serine 1754. Phosphotyrosine is present on tyrosine 1756. Residue threonine 1758 is modified to Phosphothreonine. Residues 1760-1795 (TPARGQAPLETSLDSLGDAFPDSGRKTRSARRRTTQ) form a disordered region. Residues 1770-1792 (TSLDSLGDAFPDSGRKTRSARRR) form a 4.1-binding domain region. Residue serine 1771 is modified to Phosphoserine; by PLK1. Residues serine 1774 and serine 1782 each carry the phosphoserine modification. At threonine 1786 the chain carries Phosphothreonine. Lysine 1804 is covalently cross-linked (Glycyl lysine isopeptide (Lys-Gly) (interchain with G-Cter in SUMO2)). 2 disordered regions span residues 1807 to 1883 (LEEP…GRNS) and 1937 to 2094 (EMKT…KVKH). Serine 1812 and serine 1815 each carry phosphoserine. Residues 1812-1839 (SANSSFYSTQSAPASQANLRATSSTQSL) show a composition bias toward polar residues. The residue at position 1816 (serine 1816) is a Phosphoserine; by PLK1. Tyrosine 1818 is subject to Phosphotyrosine. Serine 1822 bears the Phosphoserine mark. Serine 1826 bears the Phosphoserine; alternate mark. O-linked (GlcNAc) serine; alternate glycosylation is present at serine 1826. Phosphoserine occurs at positions 1844 and 1869. A tubulin-binding domain region spans residues 1864-1967 (SSARRSQARM…AEGVGITTRQ (104 aa)). A GPSM2-binding domain region spans residues 1874 to 1908 (SSGAPQGRNSFYMGTCQDEPEQLDDWNRIAELQQR). Residues 1937 to 1948 (EMKTGDPRETLR) are compositionally biased toward basic and acidic residues. A Phosphoserine modification is found at serine 1951. A membrane-binding domain 2 region spans residues 1963–2042 (ITTRQQRKRV…SILNTPKKLG (80 aa)). Residues 1966 to 1971 (RQQRKR) carry the Nuclear localization signal motif. A phosphoserine mark is found at serine 1973 and serine 1974. Threonine 1982 carries the phosphothreonine modification. Residue serine 1985 is modified to Phosphoserine. Residue threonine 1997 is modified to Phosphothreonine; by CDK1. The span at 1997–2006 (TPRDRHEGRK) shows a compositional bias: basic and acidic residues. Position 2029 is a phosphoserine (serine 2029). At threonine 2037 the chain carries Phosphothreonine. Phosphoserine occurs at positions 2044 and 2059. Serine 2069 is subject to Phosphoserine; by CDK1. Residues 2073 to 2085 (ATTTTGTATVATT) show a composition bias toward low complexity. Threonine 2085 carries the phosphothreonine; by CDK1 modification.

As to quaternary structure, homodimer. Also forms multiarm oligomers by association of C-terminal tail domains, oligomers may further assemble to form a hexagonal nuclear lattice-like network. Associates with the dynein-dynactin complex; this association promotes the transport and accumulation of NUMA1 at the mitotic spindle poles that is inhibited by the BRISC complex in a PLK1-dependent manner. Part of a spindle orientation complex at least composed of GNAI1, GPSM2 and NUMA1. Interacts (via C-terminus) with microtubules (MTs); this interaction is direct and promotes both MT bundle formation and stability in a dynein-dynactin complex- and CDK1-independent manner. Interacts with EPB41 and EPB41L2; these interactions are negatively regulated by CDK1 during metaphase and are important for anaphase-specific localization of NUMA1 in symmetrically dividing cells. Interacts (via C-terminus) with GPSM2 (via TPR repeats); this interaction is direct, prevented by competitive binding of INSC, is inhibited in a PLK1-dependent manner, blocks the association of NUMA1 with MTs and inhibits NUMA1-induced MT bundle formation, prevents the association of NUMA1 with SPAG5, induces mitotic spindle pole localization of GPSM2, both metaphase cell cortex localization of NUMA1 and mitotic spindle organization. Does not interact with GPSM2 during anaphase. Interacts (via C-terminus) with the nuclear importin alpha/importin beta receptor; this interaction is inhibited by RanGTP. Interacts (via C-terminus) with KPNB1; this interaction is inhibited by RanGTP and the BRISC complex. Interacts with ABRAXAS2 and the BRISC complex; these interactions regulate mitotic spindle assembly. Interacts (via N-terminal end of the coiled-coil domain) with RAE1; this interaction promotes mitotic spindle formation. Interacts (via C-terminus) with SPAG5 (via C-terminus); this interaction promotes the recruitment of SPAG5 to the MTs at spindle poles in a dynein-dynactin-dependent manner and regulates mitotic spindle organization and proper chromosome alignment during mitosis. Interacts with TNKS; this interaction occurs at the onset of mitosis. Interacts with TNKS2. Interacts with tubulin. Interacts with KHDC3 (via C-terminus). Post-translationally, phosphorylation and dephosphorylation on Thr-2037 regulates the extent of cortical NUMA1 and the dynein-dynactin complex localization during mitotic metaphase and anaphase. In metaphase, phosphorylation on Thr-2037 occurs in a kinase CDK1-dependent manner; this phosphorylation maintains low levels of cortical dynein-dynactin complex at metaphase, and hence proper spindle positioning. In anaphase, dephosphorylated on Thr-2037 by phosphatase PPP2CA; this dephosphorylation stimulates its membrane association and with the dynein-dynactin complex its enrichment at the cell cortex, and hence robust spindle elongation. Probably also phosphorylated on Thr-1997 and Ser-2069 by CDK1; these phosphorylations may regulate its cell cortex recruitment during metaphase and anaphase. Phosphorylated on Ser-1751, Ser-1754, Ser-1771 and Ser-1816 by PLK1; these phosphorylations induce cortical dynein-dynactin complex dissociation from the NUMA1-GPSM2 complex and negatively regulates cortical dynein-dynactin complex localization. In terms of processing, ADP-ribosylated by TNKS at the onset of mitosis; ADP-ribosylation is not required for its localization to spindle poles. O-glycosylated during cytokinesis at sites identical or close to phosphorylation sites, this interferes with the phosphorylation status. Post-translationally, ubiquitinated with 'Lys-63'-linked polyubiquitin chains. Deubiquitination by the BRISC complex is important for the incorporation of NUMA1 into mitotic spindle poles and normal spindle pole function, probably by modulating interactions between NUMA1, dynein-dynactin complex and importin-beta. Expressed in testis, speen, liver, lung, spinal cord and brain. Expressed in Purkinje neurons (at protein level).

It localises to the nucleus. It is found in the nucleoplasm. Its subcellular location is the nucleus matrix. The protein localises to the chromosome. The protein resides in the cytoplasm. It localises to the cytoskeleton. It is found in the microtubule organizing center. Its subcellular location is the centrosome. The protein localises to the spindle pole. The protein resides in the cell cortex. It localises to the cell membrane. It is found in the lateral cell membrane. In terms of biological role, microtubule (MT)-binding protein that plays a role in the formation and maintenance of the spindle poles and the alignement and the segregation of chromosomes during mitotic cell division. Functions to tether the minus ends of MTs at the spindle poles, which is critical for the establishment and maintenance of the spindle poles. Plays a role in the establishment of the mitotic spindle orientation during metaphase and elongation during anaphase in a dynein-dynactin-dependent manner. In metaphase, part of a ternary complex composed of GPSM2 and G(i) alpha proteins, that regulates the recruitment and anchorage of the dynein-dynactin complex in the mitotic cell cortex regions situated above the two spindle poles, and hence regulates the correct oritentation of the mitotic spindle. During anaphase, mediates the recruitment and accumulation of the dynein-dynactin complex at the cell membrane of the polar cortical region through direct association with phosphatidylinositol 4,5-bisphosphate (PI(4,5)P2), and hence participates in the regulation of the spindle elongation and chromosome segregation. Also binds to other polyanionic phosphoinositides, such as phosphatidylinositol 3-phosphate (PIP), lysophosphatidic acid (LPA) and phosphatidylinositol triphosphate (PIP3), in vitro. Also required for proper orientation of the mitotic spindle during asymmetric cell divisions. Plays a role in mitotic MT aster assembly. Involved in anastral spindle assembly. Positively regulates TNKS protein localization to spindle poles in mitosis. Highly abundant component of the nuclear matrix where it may serve a non-mitotic structural role, occupies the majority of the nuclear volume. Required for epidermal differentiation and hair follicle morphogenesis. In Mus musculus (Mouse), this protein is Nuclear mitotic apparatus protein 1.